Here is a 936-residue protein sequence, read N- to C-terminus: General transcription factor II-I repeat domain-containing protein 2 (936 aa).

Residues 95 to 189 (EACPGEAQLL…FLGAESQLGG (95 aa)) form a GTF2I-like 1 repeat. The interval 199 to 222 (PTVPPNDSYGPVSVKTEPMEDSGT) is disordered. One copy of the GTF2I-like 2 repeat lies at 319–413 (LSGLEKIKQL…LPGLELSNVG (95 aa)).

Belongs to the TFII-I family. In terms of tissue distribution, ubiquitous.

It localises to the nucleus. This Mus musculus (Mouse) protein is General transcription factor II-I repeat domain-containing protein 2 (Gtf2ird2).